Reading from the N-terminus, the 262-residue chain is WW domain-binding protein 2 (262 aa).

Residues 1–84 enclose the GRAM domain; sequence MALNKNHSEG…YLMKDCEVKQ (84 aa). Phosphotyrosine is present on Tyr-192. The PPxY motif 1 signature appears at 196 to 200; it reads PPPPY. Over residues 197–206 the composition is skewed to pro residues; sequence PPPYPGPMEP. Residues 197-262 are disordered; sequence PPPYPGPMEP…YYPPEDKKTQ (66 aa). Positions 219–231 are enriched in low complexity; sequence AAEAKAAEAAASA. A Phosphotyrosine modification is found at Tyr-232. The span at 246–255 shows a compositional bias: pro residues; the sequence is SQPPPPPYYP. The PPxY motif 2 signature appears at 249 to 253; that stretch reads PPPPY.

Binds to the WW domain of YAP1, WWP1 and WWP2. Interacts with NEDD4. Interacts with ESR1 and UBE3A. Phosphorylated in repsonse to EGF as well as estrogen and progesterone hormones. Tyr-192 and Tyr-232 are phosphorylated by YES and SRC inducing nuclear translocation.

The protein localises to the cytoplasm. Its subcellular location is the nucleus. Acts as a transcriptional coactivator of estrogen and progesterone receptors (ESR1 and PGR) upon hormone activation. In presence of estrogen, binds to ESR1-responsive promoters. Synergizes with YAP1 to enhance PGR activity. Modulates expression of post-synaptic scaffolding proteins via regulation of ESR1, ESR2 and PGR. The polypeptide is WW domain-binding protein 2 (Wbp2) (Rattus norvegicus (Rat)).